The following is a 423-amino-acid chain: Gamma-glutamyl phosphate reductase 2 (423 aa).

It belongs to the gamma-glutamyl phosphate reductase family.

It localises to the cytoplasm. The enzyme catalyses L-glutamate 5-semialdehyde + phosphate + NADP(+) = L-glutamyl 5-phosphate + NADPH + H(+). It participates in amino-acid biosynthesis; L-proline biosynthesis; L-glutamate 5-semialdehyde from L-glutamate: step 2/2. Functionally, catalyzes the NADPH-dependent reduction of L-glutamate 5-phosphate into L-glutamate 5-semialdehyde and phosphate. The product spontaneously undergoes cyclization to form 1-pyrroline-5-carboxylate. The chain is Gamma-glutamyl phosphate reductase 2 from Bacillus licheniformis (strain ATCC 14580 / DSM 13 / JCM 2505 / CCUG 7422 / NBRC 12200 / NCIMB 9375 / NCTC 10341 / NRRL NRS-1264 / Gibson 46).